Consider the following 559-residue polypeptide: 2-isopropylmalate synthase (559 aa).

The 275-residue stretch at Pro33–Asp307 folds into the Pyruvate carboxyltransferase domain. Asp42, His246, His248, and Asn282 together coordinate Mg(2+). The interval Ala439–Ala559 is regulatory domain.

The protein belongs to the alpha-IPM synthase/homocitrate synthase family. LeuA type 2 subfamily. In terms of assembly, homodimer. Requires Mg(2+) as cofactor.

It localises to the cytoplasm. It carries out the reaction 3-methyl-2-oxobutanoate + acetyl-CoA + H2O = (2S)-2-isopropylmalate + CoA + H(+). It functions in the pathway amino-acid biosynthesis; L-leucine biosynthesis; L-leucine from 3-methyl-2-oxobutanoate: step 1/4. Catalyzes the condensation of the acetyl group of acetyl-CoA with 3-methyl-2-oxobutanoate (2-ketoisovalerate) to form 3-carboxy-3-hydroxy-4-methylpentanoate (2-isopropylmalate). The sequence is that of 2-isopropylmalate synthase from Pseudomonas fluorescens (strain SBW25).